Consider the following 340-residue polypeptide: Uroporphyrinogen decarboxylase (340 aa).

Substrate contacts are provided by residues Arg-21 to Arg-25, Phe-40, Asp-71, Tyr-147, Ser-202, and His-316.

This sequence belongs to the uroporphyrinogen decarboxylase family. In terms of assembly, homodimer.

It is found in the cytoplasm. It catalyses the reaction uroporphyrinogen III + 4 H(+) = coproporphyrinogen III + 4 CO2. The protein operates within porphyrin-containing compound metabolism; protoporphyrin-IX biosynthesis; coproporphyrinogen-III from 5-aminolevulinate: step 4/4. Functionally, catalyzes the decarboxylation of four acetate groups of uroporphyrinogen-III to yield coproporphyrinogen-III. The protein is Uroporphyrinogen decarboxylase of Helicobacter hepaticus (strain ATCC 51449 / 3B1).